A 5112-amino-acid polypeptide reads, in one-letter code: Malformin synthetase mlfA (5112 aa).

The segment at 225–616 (ERHAANRPHS…CGRADTQVKL (392 aa)) is adenylation 1. A Carrier 1 domain is found at 757-830 (SRLEQEIQLA…EAASLAEVQE (74 aa)). At Ser791 the chain carries O-(pantetheine 4'-phosphoryl)serine. The interval 868 to 1299 (EDVFPCTTMQ…ALDSLTLLQA (432 aa)) is condensation 1. An adenylation 2 region spans residues 1327–1716 (DRRVTRQPDT…GRKDTQVKLR (390 aa)). Residues 1854–1931 (TAASELERTL…QLAAELGESP (78 aa)) enclose the Carrier 2 domain. Ser1891 carries the post-translational modification O-(pantetheine 4'-phosphoryl)serine. 2 disordered regions span residues 1926–1961 (ELGE…DGVD) and 1994–2034 (GGSS…VPEP). Composition is skewed to low complexity over residues 1930 to 1941 (SPRSSTSSASSS) and 1994 to 2012 (GGSS…SSSS). A condensation 2 region spans residues 2064–2479 (EDIYPATALQ…AVSYSDKQTL (416 aa)). Positions 2502–2894 (IRTPHAPAVC…IGRRDGQVKL (393 aa)) are adenylation 3. The 77-residue stretch at 3030–3106 (RPTTAKECEM…QLLFHLRNAK (77 aa)) folds into the Carrier 3 domain. The residue at position 3067 (Ser3067) is an O-(pantetheine 4'-phosphoryl)serine. 2 condensation regions span residues 3122–3586 (WVDL…TYEQ) and 3607–4044 (NIYP…EQLV). The interval 4069-4459 (HSSRQAVCAW…VGRKDNQIKF (391 aa)) is adenylation 4. One can recognise a Carrier 4 domain in the interval 4593–4669 (MPSTEAECIM…DLARHNSLVQ (77 aa)). Ser4630 is modified (O-(pantetheine 4'-phosphoryl)serine). Residues 4724–5106 (IVVDIPGRIS…VEKVVALLRD (383 aa)) form a condensation 5 region.

Belongs to the NRP synthetase family.

It functions in the pathway secondary metabolite biosynthesis. Functionally, nonribosomal peptide synthetase; part of the gene cluster that mediates the biosynthesis of malformins, cyclic pentapeptides with a disulfide bond between 2 consecutive cysteins, that show potential anti-tumor as well as antimalarial and antitrypanosomal properties. The nonribosomal peptide synthetase mlfA is responsible of the formation of the cyclic pentapeptide. MlfA probably acts iteratively on one amino acid and possesses multiple amino acid specificities since it is involved in the biosynthesis of multiple malformins, including malformin C and malformin A2. Malformin C corresponds to a cyclo[D-Cys-D-Cys-Val-D-Leu-Val] pentapeptide whereas malformin A2 corresponds to a cyclo[D-Cys-D-Cys-Val-D-Leu-Ile] pentapeptide. The malformin biosynthesis clusters in malformin-producing fungi also contain enzymes involved in the formation of the disulfide bond between the two consecutive cysteins within malformins, in addition to additional tailoring enzymes such as methyltransferases or oxidoreductases. They are also composed of up to 4 major facilitator superfamily transporters, and transcription factors probably involved in the regulation of the expression of those clusters. The protein is Malformin synthetase mlfA of Aspergillus brasiliensis (strain CBS 101740 / IMI 381727 / IBT 21946).